Here is a 362-residue protein sequence, read N- to C-terminus: Probable prephenate dehydrogenase NovF (362 aa).

One can recognise a Prephenate/arogenate dehydrogenase domain in the interval 2–283; sequence RTAVIIGTGM…GIDGSNRVPG (282 aa).

It belongs to the prephenate/arogenate dehydrogenase family.

The enzyme catalyses prephenate + NAD(+) = 3-(4-hydroxyphenyl)pyruvate + CO2 + NADH. Its pathway is antibiotic biosynthesis; novobiocin biosynthesis. Functionally, probable prephenate dehydrogenase that produces 4-hydroxyphenylpyruvate (4HPP) in the novobiocin biosynthesis pathway. Novobiocin is an aminocoumarin family antibiotic that targets bacterial DNA gyrases. This Streptomyces niveus (Streptomyces spheroides) protein is Probable prephenate dehydrogenase NovF (novF).